We begin with the raw amino-acid sequence, 628 residues long: Chaperone protein HtpG (628 aa).

The segment at 1-339 is a; substrate-binding; it reads MSNNQQTLGF…SNDLPLNVSR (339 aa). The interval 340-556 is b; the sequence is EILQDNKTTA…NDQMTTQMAK (217 aa). A c region spans residues 557–628; the sequence is LFAMSGQPVP…IKRVNTLLAG (72 aa).

It belongs to the heat shock protein 90 family. As to quaternary structure, homodimer.

The protein localises to the cytoplasm. Its function is as follows. Molecular chaperone. Has ATPase activity. This is Chaperone protein HtpG from Actinobacillus succinogenes (strain ATCC 55618 / DSM 22257 / CCUG 43843 / 130Z).